A 22-amino-acid chain; its full sequence is Caerin-3.3 (22 aa).

Position 22 is a lysine amide (Lys22).

As to expression, expressed by the skin parotoid and/or rostral glands.

It is found in the secreted. In terms of biological role, antibacterial peptide, that adopts an alpha helical conformation which can disrupt bacterial membranes. Each caerin displays a different antimicrobial specificity. The protein is Caerin-3.3 of Ranoidea caerulea (Green tree frog).